A 278-amino-acid polypeptide reads, in one-letter code: Large ribosomal subunit protein uL2 (278 aa).

Positions 223–278 (GVAMNPIDHPHGGGEGRTSGGRHPVTPWGFPTKGKKTRSNKRTDTFIVSSRHNRKK) are disordered.

Belongs to the universal ribosomal protein uL2 family. As to quaternary structure, part of the 50S ribosomal subunit. Forms a bridge to the 30S subunit in the 70S ribosome.

Functionally, one of the primary rRNA binding proteins. Required for association of the 30S and 50S subunits to form the 70S ribosome, for tRNA binding and peptide bond formation. It has been suggested to have peptidyltransferase activity; this is somewhat controversial. Makes several contacts with the 16S rRNA in the 70S ribosome. In Methylobacterium sp. (strain 4-46), this protein is Large ribosomal subunit protein uL2.